The following is a 168-amino-acid chain: tRNA-splicing endonuclease (168 aa).

Residues Y107, H114, and K145 contribute to the active site.

This sequence belongs to the tRNA-intron endonuclease family. Archaeal short subfamily. As to quaternary structure, homotetramer; although the tetramer contains four active sites, only two participate in the cleavage. Therefore, it should be considered as a dimer of dimers.

The catalysed reaction is pretRNA = a 3'-half-tRNA molecule with a 5'-OH end + a 5'-half-tRNA molecule with a 2',3'-cyclic phosphate end + an intron with a 2',3'-cyclic phosphate and a 5'-hydroxyl terminus.. Its function is as follows. Endonuclease that removes tRNA introns. Cleaves pre-tRNA at the 5'- and 3'-splice sites to release the intron. The products are an intron and two tRNA half-molecules bearing 2',3' cyclic phosphate and 5'-OH termini. Recognizes a pseudosymmetric substrate in which 2 bulged loops of 3 bases are separated by a stem of 4 bp. The chain is tRNA-splicing endonuclease from Thermococcus kodakarensis (strain ATCC BAA-918 / JCM 12380 / KOD1) (Pyrococcus kodakaraensis (strain KOD1)).